Consider the following 142-residue polypeptide: Centromere protein S (142 aa).

The segment at 107–142 (LKGKAKKKRKPEDESRSSRESMAEELDGAEELQSES) is disordered. Positions 116–128 (KPEDESRSSRESM) are enriched in basic and acidic residues. A compositionally biased stretch (acidic residues) spans 129–142 (AEELDGAEELQSES).

Belongs to the TAF9 family. CENP-S/MHF1 subfamily. As to quaternary structure, heterodimer with CENPX, sometimes called MHF; this interaction stabilizes both partners. MHF heterodimers can assemble to form tetrameric structures. MHF also coassemble with CENPT-CENPW heterodimers at centromeres to form the tetrameric CENP-T-W-S-X complex. Forms a discrete complex with FANCM and CENPX, called FANCM-MHF; this interaction, probably mediated by direct binding between CENPS and FANCM, leads to synergistic activation of double-stranded DNA binding and strongly stimulates FANCM-mediated DNA remodeling. Recruited by FANCM to the Fanconi anemia (FA) core complex, which consists of CENPS, CENPX, FANCA, FANCB, FANCC, FANCE, FANCF, FANCG, FANCL, FANCM, FAAP24 and FAAP100. The FA core complex associates with Bloom syndrome (BLM) complex, which consists of at least BLM, DNA topoisomerase 3-alpha (TOP3A), RMI1/BLAP75, RPA1/RPA70 and RPA2/RPA32. The super complex between FA and BLM is called BRAFT. Component of the CENPA-CAD complex, composed of CENPI, CENPK, CENPL, CENPO, CENPP, CENPQ, CENPR and CENPS. The CENPA-CAD complex is probably recruited on centromeres by the CENPA-NAC complex, at least composed of CENPA, CENPC, CENPH, CENPM, CENPN, CENPT and CENPU.

The protein resides in the nucleus. It localises to the chromosome. Its subcellular location is the centromere. The protein localises to the kinetochore. DNA-binding component of the Fanconi anemia (FA) core complex. Required for the normal activation of the FA pathway, leading to monoubiquitination of the FANCI-FANCD2 complex in response to DNA damage, cellular resistance to DNA cross-linking drugs, and prevention of chromosomal breakage. In complex with CENPX (MHF heterodimer), crucial cofactor for FANCM in both binding and ATP-dependent remodeling of DNA. Stabilizes FANCM. In complex with CENPX and FANCM (but not other FANC proteins), rapidly recruited to blocked forks and promotes gene conversion at blocked replication forks. In complex with CENPT, CENPW and CENPX (CENP-T-W-S-X heterotetramer), involved in the formation of a functional kinetochore outer plate, which is essential for kinetochore-microtubule attachment and faithful mitotic progression. As a component of MHF and CENP-T-W-S-X complexes, binds DNA and bends it to form a nucleosome-like structure. DNA-binding function is fulfilled in the presence of CENPX, with the following preference for DNA substates: Holliday junction &gt; double-stranded &gt; splay arm &gt; single-stranded. Does not bind DNA on its own. The polypeptide is Centromere protein S (Cenps) (Mus musculus (Mouse)).